A 208-amino-acid polypeptide reads, in one-letter code: ATP-dependent Clp protease proteolytic subunit (208 aa).

Catalysis depends on Ser-106, which acts as the Nucleophile. Residue His-131 is part of the active site.

This sequence belongs to the peptidase S14 family. In terms of assembly, fourteen ClpP subunits assemble into 2 heptameric rings which stack back to back to give a disk-like structure with a central cavity, resembling the structure of eukaryotic proteasomes.

The protein resides in the cytoplasm. The catalysed reaction is Hydrolysis of proteins to small peptides in the presence of ATP and magnesium. alpha-casein is the usual test substrate. In the absence of ATP, only oligopeptides shorter than five residues are hydrolyzed (such as succinyl-Leu-Tyr-|-NHMec, and Leu-Tyr-Leu-|-Tyr-Trp, in which cleavage of the -Tyr-|-Leu- and -Tyr-|-Trp bonds also occurs).. Cleaves peptides in various proteins in a process that requires ATP hydrolysis. Has a chymotrypsin-like activity. Plays a major role in the degradation of misfolded proteins. The chain is ATP-dependent Clp protease proteolytic subunit from Caulobacter sp. (strain K31).